The chain runs to 95 residues: FXYD domain-containing ion transport regulator 6 (95 aa).

An N-terminal signal peptide occupies residues 1-18 (MEVVLLFLCGLLAPAVLA). The Extracellular segment spans residues 19-35 (SATEQEKEKDPFHYDYQ). A helical transmembrane segment spans residues 36-58 (TLRIGGLVFAVVLFSVGILLILS). At 59 to 95 (RRCKCSFNQKPRAPGDEEAQVENLVTANATEPQKAEN) the chain is on the cytoplasmic side. Residues 69–95 (PRAPGDEEAQVENLVTANATEPQKAEN) form a disordered region.

It belongs to the FXYD family. In terms of assembly, regulatory subunit of the sodium/potassium-transporting ATPase which is composed of a catalytic alpha subunit, a non-catalytic beta subunit and an additional regulatory subunit. The regulatory subunit, a member of the FXYD protein family, modulates the enzymatic activity in a tissue- and isoform-specific way by changing affinities of the Na+/K+-ATPase toward Na(+), K(+) or ATP.

The protein localises to the cell membrane. In terms of biological role, associates with and regulates the activity of the sodium/potassium-transporting ATPase (NKA) which catalyzes the hydrolysis of ATP coupled with the exchange of Na(+) and K(+) ions across the plasma membrane. Reduces the apparent affinity for intracellular Na(+) with no change in the apparent affinity for extracellular K(+). In addition to modulating NKA kinetics, may also function as a regulator of NKA localization to the plasma membrane. The polypeptide is FXYD domain-containing ion transport regulator 6 (FXYD6) (Bos taurus (Bovine)).